The chain runs to 298 residues: NAD kinase (298 aa).

Asp80 serves as the catalytic Proton acceptor. Residues Asp80 to Gly81, Asn154 to Asp155, Arg182, Asp184, Thr195 to Ser200, Ala219, and Gln253 each bind NAD(+).

This sequence belongs to the NAD kinase family. It depends on a divalent metal cation as a cofactor.

It localises to the cytoplasm. The enzyme catalyses NAD(+) + ATP = ADP + NADP(+) + H(+). Involved in the regulation of the intracellular balance of NAD and NADP, and is a key enzyme in the biosynthesis of NADP. Catalyzes specifically the phosphorylation on 2'-hydroxyl of the adenosine moiety of NAD to yield NADP. The chain is NAD kinase from Acidovorax ebreus (strain TPSY) (Diaphorobacter sp. (strain TPSY)).